A 393-amino-acid polypeptide reads, in one-letter code: Phosphoglycerate kinase (393 aa).

Residues 21 to 23 (DLN), Arg-36, 59 to 62 (HLGR), Arg-113, and Arg-146 contribute to the substrate site. Residues Lys-197, Glu-319, and 345-348 (GGDT) contribute to the ATP site.

This sequence belongs to the phosphoglycerate kinase family. In terms of assembly, monomer.

It localises to the cytoplasm. The enzyme catalyses (2R)-3-phosphoglycerate + ATP = (2R)-3-phospho-glyceroyl phosphate + ADP. It functions in the pathway carbohydrate degradation; glycolysis; pyruvate from D-glyceraldehyde 3-phosphate: step 2/5. In Nitratidesulfovibrio vulgaris (strain DSM 19637 / Miyazaki F) (Desulfovibrio vulgaris), this protein is Phosphoglycerate kinase.